Here is a 1090-residue protein sequence, read N- to C-terminus: UPF0507 protein EC1118_1M3_1541g (1090 aa).

The VPS9 domain occupies 289 to 436 (FSVNQLLTDF…FEDFNKNTGN (148 aa)).

The protein belongs to the UPF0507 family.

The protein is UPF0507 protein EC1118_1M3_1541g of Saccharomyces cerevisiae (strain Lalvin EC1118 / Prise de mousse) (Baker's yeast).